We begin with the raw amino-acid sequence, 504 residues long: Activin receptor type-1 (504 aa).

Residues 1-16 (MALPVLLLLLALPSRS) form the signal peptide. Residues 17-119 (VQDEELKLNE…EAAGYSMETL (103 aa)) are Extracellular-facing. An N-linked (GlcNAc...) asparagine glycan is attached at N94. The chain crosses the membrane as a helical span at residues 120-140 (IIVILAPVVVLVIFSVVAVLI). Residues 141 to 504 (IRRIQKNHME…NSLDKLKADC (364 aa)) lie on the Cytoplasmic side of the membrane. The GS domain occupies 173–202 (STLADLLDHSCTSGSGSGLPFLVQRTVARQ). The Protein kinase domain maps to 203–497 (ITLVECVGKG…KTLTKIDNSL (295 aa)). ATP contacts are provided by residues 209 to 217 (VGKGRYGEV) and K230. Residue D331 is the Proton acceptor of the active site.

It belongs to the protein kinase superfamily. TKL Ser/Thr protein kinase family. TGFB receptor subfamily. Mg(2+) is required as a cofactor. The cofactor is Mn(2+).

The protein localises to the membrane. It catalyses the reaction L-threonyl-[receptor-protein] + ATP = O-phospho-L-threonyl-[receptor-protein] + ADP + H(+). The catalysed reaction is L-seryl-[receptor-protein] + ATP = O-phospho-L-seryl-[receptor-protein] + ADP + H(+). Its function is as follows. On ligand binding, forms a receptor complex consisting of two type II and two type I transmembrane serine/threonine kinases. Type II receptors phosphorylate and activate type I receptors which autophosphorylate, then bind and activate SMAD transcriptional regulators. Receptor for activin. The chain is Activin receptor type-1 (ACVR1) from Gallus gallus (Chicken).